An 88-amino-acid chain; its full sequence is MALKERIGTVVSDKMDKTVVVAVINRYPHPTYKKIVSRTTRYKAHDPENTCVLGDRVKIRETRPLSAHKRWAIEEILNKTSQAKEVKK.

This sequence belongs to the universal ribosomal protein uS17 family. Part of the 30S ribosomal subunit.

Its function is as follows. One of the primary rRNA binding proteins, it binds specifically to the 5'-end of 16S ribosomal RNA. The protein is Small ribosomal subunit protein uS17 of Prochlorococcus marinus (strain MIT 9301).